Here is a 239-residue protein sequence, read N- to C-terminus: LRRN4 C-terminal-like protein (239 aa).

An N-terminal signal peptide occupies residues 1–19 (MLGSLSLLWLAAMTTSLVS). At 20–194 (QPQILTLEDY…KFIMPPKPVT (175 aa)) the chain is on the extracellular side. Residues 82 to 179 (QPEPPRLGEV…EGPENWTGPS (98 aa)) enclose the Fibronectin type-III domain. 2 N-linked (GlcNAc...) asparagine glycosylation sites follow: N132 and N174. A helical membrane pass occupies residues 195–215 (LVYAAVGVGTALALLSCAALV). Topologically, residues 216-239 (WHFCLRERWGCPRRQGMAQASEAL) are cytoplasmic.

The protein localises to the membrane. The chain is LRRN4 C-terminal-like protein (Lrrn4cl) from Mus musculus (Mouse).